A 270-amino-acid chain; its full sequence is Type III pantothenate kinase (270 aa).

11 to 18 is a binding site for ATP; it reads DAGNSRIK. Substrate contacts are provided by residues Tyr96 and 103–106; that span reads GSDR. Asp105 (proton acceptor) is an active-site residue. Thr129 contacts ATP. A substrate-binding site is contributed by Thr195.

It belongs to the type III pantothenate kinase family. Homodimer. Requires NH4(+) as cofactor. The cofactor is K(+).

Its subcellular location is the cytoplasm. The enzyme catalyses (R)-pantothenate + ATP = (R)-4'-phosphopantothenate + ADP + H(+). Its pathway is cofactor biosynthesis; coenzyme A biosynthesis; CoA from (R)-pantothenate: step 1/5. Catalyzes the phosphorylation of pantothenate (Pan), the first step in CoA biosynthesis. The polypeptide is Type III pantothenate kinase (Paraburkholderia phytofirmans (strain DSM 17436 / LMG 22146 / PsJN) (Burkholderia phytofirmans)).